The chain runs to 75 residues: Rugosin-LK2 (75 aa).

Positions 1–24 (MFTMKKSLLFLFFLGTISLSFCEG) are cleaved as a signal peptide. The propeptide occupies 25–40 (ERSADEDDEGEMTEEE).

In terms of tissue distribution, expressed by the skin glands.

The protein resides in the secreted. Functionally, has antimicrobial activity against Gram-positive bacteria S.aureus ATCC 2592 (MIC=10.0 uM), S.aureus ATCC 43300 (MIC=10.0 uM) and B.subtilis (MIC=30.0 uM), against Gram-negative bacteria E.coli ML-35P (MIC=10.0 uM), P.aeruginosa PA01 (MIC=2.5 uM) and P.aeruginosa ATCC 27853 (MIC=2.5 uM) and against fungus C.albicans ATCC 2002 (MIC=10.0 uM). The protein is Rugosin-LK2 of Limnonectes kuhlii (Kuhl's Creek frog).